A 442-amino-acid chain; its full sequence is Cyclic 2,3-diphosphoglycerate synthetase (442 aa).

Belongs to the cyclic 2,3-diphosphoglycerate synthetase family.

It is found in the cytoplasm. It catalyses the reaction (2R)-2,3-bisphosphoglycerate + ATP + H(+) = cyclic (2R)-2,3-bisphosphoglycerate + ADP + phosphate. In terms of biological role, catalyzes the formation of cyclic 2,3-diphosphoglycerate (cDPG) by formation of an intramolecular phosphoanhydride bond at the expense of ATP. This is Cyclic 2,3-diphosphoglycerate synthetase from Rubrobacter xylanophilus (strain DSM 9941 / JCM 11954 / NBRC 16129 / PRD-1).